The chain runs to 287 residues: Pyridoxal kinase PdxY (287 aa).

Substrate-binding positions include Ser9 and 44-45 (TQ). ATP-binding positions include Asp111, Ala143, Glu148, Lys181, and 208–211 (RPLV). Residue Asp223 participates in substrate binding.

It belongs to the pyridoxine kinase family. PdxY subfamily. In terms of assembly, homodimer. It depends on Mg(2+) as a cofactor.

The enzyme catalyses pyridoxal + ATP = pyridoxal 5'-phosphate + ADP + H(+). The protein operates within cofactor metabolism; pyridoxal 5'-phosphate salvage; pyridoxal 5'-phosphate from pyridoxal: step 1/1. Functionally, pyridoxal kinase involved in the salvage pathway of pyridoxal 5'-phosphate (PLP). Catalyzes the phosphorylation of pyridoxal to PLP. The protein is Pyridoxal kinase PdxY of Photorhabdus laumondii subsp. laumondii (strain DSM 15139 / CIP 105565 / TT01) (Photorhabdus luminescens subsp. laumondii).